A 729-amino-acid polypeptide reads, in one-letter code: MSKFIEPSIEEIKLEKLYQDMGLSDAEYNKVCEILGREPNFTEVGIFSVMWSEHCSYKHSKPFLKQFPTTGEHVLMGPGEGAGVVDIGDNQAVVFKVESHNHPSAIEPYQGAATGVGGIIRDIVSIGARPINLLNSLRFGELSVKQNQRLLKGVVRGIGGYGNCIGIPTTAGEIEFDDRYDGNPLVNAMCVGVIDHDMIQKGTAKGEGNSVIYVGLKTGRDGIHGATFASEELTEESESKRPSVQIGDPFVGKKLMEATLEAITFDELVGIQDMGAAGLTSSSSEMAAKGGSGLELHLDQVPTREPGISPYEMMLSETQERMLLVVEKGTEQKFLDLFEKHELDSAVIGEVTNTDRFVLKYEDEVFADIPVQSLADEAPVYVLEGEEKEYNTSKNDYSSINVEETFKKLLIHPTIASKHYLYEQYDQQVGANTIIKPGLQSSVVRVEGTNKAVASTIDGEARYVFNQPYEGGKMVVAEAYRNLIAVGATPLAMTDCLNYGSPEKKEIYQQLIDSTKGMSEACEVLKTPVVSGNVSLYNETRGTSIFPTPVVGMVGLIEDIDYLKDFHPEAGHKLYLVGETRDDFGGSQVEKLLYGKVNHEFEAIDLSDEVNKGEAVKNTIRSGVASHVQTVGKGGLLITLARISAHYGLGLEASIDLSDAQLFSETQGRYIIVVKEGQTLNIDEAIEIGQLTDVDEFKVTNAQSSIVEKVSEIKESWEGAIAQCLTTVD.

Residue His-54 is part of the active site. ATP-binding residues include Tyr-57 and Lys-96. Glu-98 is a binding site for Mg(2+). Residues 99 to 102 (SHNH) and Arg-121 contribute to the substrate site. His-100 (proton acceptor) is an active-site residue. Mg(2+) is bound at residue Asp-122. Gln-245 serves as a coordination point for substrate. Residue Asp-273 coordinates Mg(2+). 317–319 (ETQ) provides a ligand contact to substrate. The ATP site is built by Asp-495 and Gly-532. Asn-533 contacts Mg(2+). A substrate-binding site is contributed by Ser-535.

This sequence belongs to the FGAMS family. Monomer. Part of the FGAM synthase complex composed of 1 PurL, 1 PurQ and 2 PurS subunits.

The protein resides in the cytoplasm. The catalysed reaction is N(2)-formyl-N(1)-(5-phospho-beta-D-ribosyl)glycinamide + L-glutamine + ATP + H2O = 2-formamido-N(1)-(5-O-phospho-beta-D-ribosyl)acetamidine + L-glutamate + ADP + phosphate + H(+). The protein operates within purine metabolism; IMP biosynthesis via de novo pathway; 5-amino-1-(5-phospho-D-ribosyl)imidazole from N(2)-formyl-N(1)-(5-phospho-D-ribosyl)glycinamide: step 1/2. Its function is as follows. Part of the phosphoribosylformylglycinamidine synthase complex involved in the purines biosynthetic pathway. Catalyzes the ATP-dependent conversion of formylglycinamide ribonucleotide (FGAR) and glutamine to yield formylglycinamidine ribonucleotide (FGAM) and glutamate. The FGAM synthase complex is composed of three subunits. PurQ produces an ammonia molecule by converting glutamine to glutamate. PurL transfers the ammonia molecule to FGAR to form FGAM in an ATP-dependent manner. PurS interacts with PurQ and PurL and is thought to assist in the transfer of the ammonia molecule from PurQ to PurL. The chain is Phosphoribosylformylglycinamidine synthase subunit PurL from Staphylococcus haemolyticus (strain JCSC1435).